The sequence spans 149 residues: UPF0756 membrane protein BBR47_12340 (149 aa).

4 consecutive transmembrane segments (helical) span residues 6–26 (IILLVIALLSLVAKDLVLVYA), 48–68 (PMFHVGLFCLMVFLLIPIAKG), 86–106 (IAILAGFIISYVGGKGLSILP), and 120–140 (LLAVLLSNGLPAGLIIAAGCI).

The protein belongs to the UPF0756 family.

It is found in the cell membrane. The polypeptide is UPF0756 membrane protein BBR47_12340 (Brevibacillus brevis (strain 47 / JCM 6285 / NBRC 100599)).